A 408-amino-acid chain; its full sequence is Aminoacylase-1 (408 aa).

Histidine 76 contacts Zn(2+). Residue aspartate 78 is part of the active site. Aspartate 109 is a Zn(2+) binding site. Residue glutamate 143 is the Proton acceptor of the active site. The Zn(2+) site is built by glutamate 144, glutamate 172, and histidine 379.

Belongs to the peptidase M20A family. Homodimer. Zn(2+) serves as cofactor.

The protein localises to the cytoplasm. The enzyme catalyses an N-acyl-L-amino acid + H2O = an L-alpha-amino acid + a carboxylate. The catalysed reaction is an N-acetyl-L-cysteine-S-conjugate + H2O = an S-substituted L-cysteine + acetate. Involved in the hydrolysis of N-acylated or N-acetylated amino acids (except L-aspartate). The protein is Aminoacylase-1 (acy1) of Dictyostelium discoideum (Social amoeba).